A 1215-amino-acid polypeptide reads, in one-letter code: Zinc finger E-box-binding homeobox 2 (1215 aa).

Positions 1-111 (MKQPIMADGP…ILQASVAGPE (111 aa)) are disordered. Over residues 12–24 (CKRRKQANPRRKN) the composition is skewed to basic residues. Residues 57–74 (DQDTSPASMPNHESSPHM) show a composition bias toward polar residues. The segment covering 89–98 (RESVVEHSWH) has biased composition (basic and acidic residues). Ser-142 is modified (phosphoserine). 3 consecutive C2H2-type zinc fingers follow at residues 211-234 (LTCPYCDRGYKRLTSLKEHIKYRH), 241-263 (FSCPLCSYTFAYRTQLERHMVTH), and 282-304 (FKCTECGKAFKYKHHLKEHLRIH). The C2H2-type 4; atypical zinc finger occupies 310–334 (YECPNCKKRFSHSGSYSSHISSKKC). Phosphoserine occurs at positions 356, 360, and 364. Lys-377 is modified (N6-acetyllysine). Lys-391 participates in a covalent cross-link: Glycyl lysine isopeptide (Lys-Gly) (interchain with G-Cter in SUMO); alternate. Lys-391 participates in a covalent cross-link: Glycyl lysine isopeptide (Lys-Gly) (interchain with G-Cter in SUMO2); alternate. The tract at residues 437-487 (QHLGVGMEAPLLGFPTMNSNLSEVQKVLQIVDNTVSRQKMDCKTEDISKLK) is SMAD-MH2 binding domain. Glycyl lysine isopeptide (Lys-Gly) (interchain with G-Cter in SUMO2) cross-links involve residues Lys-479 and Lys-555. The C2H2-type 5; degenerate zinc finger occupies 581-605 (FSCQFCKESFPGPIPLHQHERYLCK). Residues Lys-611 and Lys-632 each participate in a glycyl lysine isopeptide (Lys-Gly) (interchain with G-Cter in SUMO2) cross-link. Residues 644–703 (GLTSPINPYKDHMSVLKAYYAMNMEPNSDELLKISIAVGLPQEFVKEWFEQRKVYQYSNS) constitute a DNA-binding region (homeobox; atypical). Ser-647 bears the Phosphoserine mark. Disordered regions lie at residues 702-740 (NSRSPSLERTSKPLAPNSNPTTKDSLLPRSPVKPMDSIT) and 772-811 (VDKLDHSRSNTPSPLNLSSTSSKNSHSSSYTPNSFSSEEL). Lys-713 is covalently cross-linked (Glycyl lysine isopeptide (Lys-Gly) (interchain with G-Cter in SUMO2)). Residues Ser-731 and Ser-780 each carry the phosphoserine modification. Residues 780–808 (SNTPSPLNLSSTSSKNSHSSSYTPNSFSS) show a composition bias toward low complexity. Thr-782 carries the post-translational modification Phosphothreonine. Ser-784 bears the Phosphoserine mark. A Glycyl lysine isopeptide (Lys-Gly) (interchain with G-Cter in SUMO); alternate cross-link involves residue Lys-866. A Glycyl lysine isopeptide (Lys-Gly) (interchain with G-Cter in SUMO2); alternate cross-link involves residue Lys-866. 2 consecutive C2H2-type zinc fingers follow at residues 999–1021 (YACDLCDKTFQKSSSLLRHKYEH) and 1027–1049 (HQCQICKKAFKHKHHLIEHSRLH). A C2H2-type 8; atypical zinc finger spans residues 1055-1076 (YQCDKCGKRFSHSGSYSQHMNH). The tract at residues 1117 to 1215 (TPQGYSDSEE…EEDNMEDGME (99 aa)) is disordered. Phosphoserine is present on residues Ser-1122 and Ser-1124. Over residues 1127 to 1149 (RESMPRDGESEKEHEKEGEEGYG) the composition is skewed to basic and acidic residues. Residues 1157-1167 (DEEEEEEEEES) are compositionally biased toward acidic residues. Composition is skewed to basic and acidic residues over residues 1168 to 1179 (ENKSMDTDPETI) and 1186 to 1205 (GDHSMDDSSEDGKMETKSDH). The residue at position 1203 (Ser-1203) is a Phosphoserine. Residues 1206–1215 (EEDNMEDGME) are compositionally biased toward acidic residues.

This sequence belongs to the delta-EF1/ZFH-1 C2H2-type zinc-finger family. In terms of assembly, interacts with CBX4 and CTBP1. Binds activated SMAD1, activated SMAD2 and activated SMAD3; binding with SMAD4 is not detected. In terms of processing, sumoylation on Lys-391 and Lys-866 is promoted by the E3 SUMO-protein ligase CBX4, and impairs interaction with CTBP1 and transcription repression activity.

It is found in the nucleus. Its subcellular location is the chromosome. Transcriptional inhibitor that binds to DNA sequence 5'-CACCT-3' in different promoters. Represses transcription of E-cadherin. Represses expression of MEOX2. The polypeptide is Zinc finger E-box-binding homeobox 2 (Zeb2) (Mus musculus (Mouse)).